A 341-amino-acid chain; its full sequence is Methionine import ATP-binding protein MetN 1 (341 aa).

The region spanning 2–241 (IEFRQVSKTF…PKTTIAQNFV (240 aa)) is the ABC transporter domain. 38–45 (GYSGAGKS) is an ATP binding site.

This sequence belongs to the ABC transporter superfamily. Methionine importer (TC 3.A.1.24) family. The complex is composed of two ATP-binding proteins (MetN), two transmembrane proteins (MetI) and a solute-binding protein (MetQ).

The protein localises to the cell membrane. The catalysed reaction is L-methionine(out) + ATP + H2O = L-methionine(in) + ADP + phosphate + H(+). It catalyses the reaction D-methionine(out) + ATP + H2O = D-methionine(in) + ADP + phosphate + H(+). Functionally, part of the ABC transporter complex MetNIQ involved in methionine import. Responsible for energy coupling to the transport system. The protein is Methionine import ATP-binding protein MetN 1 of Staphylococcus aureus (strain MW2).